A 447-amino-acid chain; its full sequence is Argininosuccinate synthase (447 aa).

Residues 20–28 (AFSGGLDTS) and Ala-46 contribute to the ATP site. Tyr-102 serves as a coordination point for L-citrulline. 2 residues coordinate ATP: Gly-132 and Thr-134. Residues Thr-134, Asn-138, and Asp-139 each coordinate L-aspartate. Asn-138 provides a ligand contact to L-citrulline. Residue Asp-139 coordinates ATP. Residues Arg-142 and Ser-195 each contribute to the L-citrulline site. Asp-197 contributes to the ATP binding site. Residues Thr-204, Glu-206, and Glu-283 each contribute to the L-citrulline site.

The protein belongs to the argininosuccinate synthase family. Type 2 subfamily. As to quaternary structure, homotetramer.

The protein localises to the cytoplasm. It catalyses the reaction L-citrulline + L-aspartate + ATP = 2-(N(omega)-L-arginino)succinate + AMP + diphosphate + H(+). The protein operates within amino-acid biosynthesis; L-arginine biosynthesis; L-arginine from L-ornithine and carbamoyl phosphate: step 2/3. In Neisseria meningitidis serogroup A / serotype 4A (strain DSM 15465 / Z2491), this protein is Argininosuccinate synthase (argG).